The chain runs to 84 residues: Small ribosomal subunit protein bS20 (84 aa).

This sequence belongs to the bacterial ribosomal protein bS20 family.

In terms of biological role, binds directly to 16S ribosomal RNA. The polypeptide is Small ribosomal subunit protein bS20 (Lacticaseibacillus casei (strain BL23) (Lactobacillus casei)).